Here is a 253-residue protein sequence, read N- to C-terminus: Low affinity immunoglobulin gamma Fc region receptor III-B (253 aa).

A signal peptide spans 1-20 (MGQPLPPVALLLLVSASSRA). Topologically, residues 21 to 207 (ADVPKALVLL…VSSSVLPWHQ (187 aa)) are extracellular. Ig-like C2-type domains follow at residues 24–105 (PKAL…LRVH) and 120–189 (EGEP…VTIT). 2 disulfides stabilise this stretch: cysteine 47-cysteine 89 and cysteine 128-cysteine 172. N-linked (GlcNAc...) asparagine glycosylation is found at asparagine 56, asparagine 63, asparagine 165, and asparagine 180. A helical transmembrane segment spans residues 208–226 (IAFCLVMGLLLAADTGLYF). Over 227–253 (SVQRDLRSSQRARKEHTLGWSLGSQDK) the chain is Cytoplasmic.

As to quaternary structure, forms a heterooligomeric complex with ITAM-containing signaling subunits FCER1G. Interacts (via transmembrane domain) with signaling subunits; this interaction is a prerequisite for receptor complex expression on the cell surface and intracellular signal transduction. Binds the Fc region of antigen-complexed IgG.

The protein localises to the cell membrane. Its function is as follows. Receptor for the invariable Fc fragment of immunoglobulin gamma (IgG). Optimally activated upon binding of clustered antigen-IgG complexes displayed on cell surfaces, triggers lysis of antibody-coated cells, a process known as antibody-dependent cellular cytotoxicity (ADCC). Does not bind free monomeric IgG, thus avoiding inappropriate effector cell activation in the absence of antigenic trigger. Mediates IgG effector functions on natural killer (NK) cells. Binds antigen-IgG complexes generated upon infection and triggers NK cell-dependent cytokine production and degranulation to limit viral load and propagation. Fc-binding subunit that associates with FCER1G adapters to form functional signaling complexes. Following the engagement of antigen-IgG complexes, triggers phosphorylation of immunoreceptor tyrosine-based activation motif (ITAM)-containing adapters with subsequent activation of phosphatidylinositol 3-kinase signaling and sustained elevation of intracellular calcium that ultimately drive NK cell activation. Mediates enhanced ADCC in response to afucosylated IgGs. In Oryctolagus cuniculus (Rabbit), this protein is Low affinity immunoglobulin gamma Fc region receptor III-B (FCGR3B).